Consider the following 328-residue polypeptide: Protease HtpX homolog (328 aa).

The next 2 helical transmembrane spans lie at 6 to 26 (TAMLLAFMTALFMGVGYLIGG) and 28 to 48 (SGMMIAFVAAAGMNFFSYWNS). H130 is a binding site for Zn(2+). E131 is an active-site residue. Residue H134 coordinates Zn(2+). A run of 2 helical transmembrane segments spans residues 145–165 (ITATLAGAISMLGNFAFFFGG) and 172–192 (PLGAIGVLAAMIVAPLAAMLV). Position 201 (E201) interacts with Zn(2+). The segment at 279-328 (QYGGGTGPSVGTPTRSGSTGPAMTANPERKSRSVPNTGRGGSQPPKGPWS) is disordered. Residues 287–299 (SVGTPTRSGSTGP) are compositionally biased toward low complexity.

The protein belongs to the peptidase M48B family. It depends on Zn(2+) as a cofactor.

The protein localises to the cell inner membrane. The chain is Protease HtpX homolog from Rhizobium rhizogenes (strain K84 / ATCC BAA-868) (Agrobacterium radiobacter).